The primary structure comprises 1050 residues: ATP-dependent DNA helicase MPH1 (1050 aa).

In terms of domain architecture, Helicase ATP-binding spans isoleucine 95–lysine 262. Leucine 108 to threonine 115 is an ATP binding site. The short motif at aspartate 210–histidine 213 is the DEAH box element. A Helicase C-terminal domain is found at lysine 431 to methionine 631. Disordered stretches follow at residues aspartate 493–asparagine 524 and aspartate 743–arginine 821. The segment covering lysine 499 to lysine 508 has biased composition (basic residues). Basic and acidic residues predominate over residues arginine 786–glycine 799. The segment covering isoleucine 800–leucine 810 has biased composition (polar residues).

The protein belongs to the DEAD box helicase family. DEAH subfamily. FANCM sub-subfamily. Interacts with the MHF histone-fold complex to form the FANCM-MHF complex.

It localises to the nucleus. The catalysed reaction is ATP + H2O = ADP + phosphate + H(+). ATP-dependent DNA helicase involved in DNA damage repair by homologous recombination and in genome maintenance. Capable of unwinding D-loops. Plays a role in limiting crossover recombinants during mitotic DNA double-strand break (DSB) repair. Component of a FANCM-MHF complex which promotes gene conversion at blocked replication forks, probably by reversal of the stalled fork. The sequence is that of ATP-dependent DNA helicase MPH1 from Scheffersomyces stipitis (strain ATCC 58785 / CBS 6054 / NBRC 10063 / NRRL Y-11545) (Yeast).